We begin with the raw amino-acid sequence, 399 residues long: S-adenosylmethionine synthase (399 aa).

His-17 is a binding site for ATP. Mg(2+) is bound at residue Asp-19. Glu-45 contributes to the K(+) binding site. Glu-58 and Gln-101 together coordinate L-methionine. The interval Gln-101–Glu-111 is flexible loop. ATP contacts are provided by residues Asp-177–Lys-179, Arg-244–Phe-245, Asp-253, Arg-259–Lys-260, Ala-276, and Lys-280. Residue Asp-253 participates in L-methionine binding. Lys-284 serves as a coordination point for L-methionine.

Belongs to the AdoMet synthase family. As to quaternary structure, homotetramer; dimer of dimers. Mg(2+) serves as cofactor. K(+) is required as a cofactor.

The protein localises to the cytoplasm. It carries out the reaction L-methionine + ATP + H2O = S-adenosyl-L-methionine + phosphate + diphosphate. Its pathway is amino-acid biosynthesis; S-adenosyl-L-methionine biosynthesis; S-adenosyl-L-methionine from L-methionine: step 1/1. Functionally, catalyzes the formation of S-adenosylmethionine (AdoMet) from methionine and ATP. The overall synthetic reaction is composed of two sequential steps, AdoMet formation and the subsequent tripolyphosphate hydrolysis which occurs prior to release of AdoMet from the enzyme. The protein is S-adenosylmethionine synthase of Listeria innocua serovar 6a (strain ATCC BAA-680 / CLIP 11262).